The sequence spans 131 residues: Putative pre-16S rRNA nuclease (131 aa).

Belongs to the YqgF nuclease family.

Its subcellular location is the cytoplasm. Could be a nuclease involved in processing of the 5'-end of pre-16S rRNA. This chain is Putative pre-16S rRNA nuclease, found in Bordetella avium (strain 197N).